Here is a 61-residue protein sequence, read N- to C-terminus: Conotoxin Vn5.3 (61 aa).

Residues 1–19 form the signal peptide; the sequence is MRCLPVFVILLLLIASAPG. Positions 20 to 50 are excised as a propeptide; sequence VDVQPKTKYYVPRASRRDFAKKTPKRLSKLR.

Belongs to the conotoxin T superfamily. Post-translationally, contains 2 disulfide bonds that can be either 'C1-C3, C2-C4' or 'C1-C4, C2-C3', since these disulfide connectivities have been observed for conotoxins with cysteine framework V (for examples, see AC P0DQQ7 and AC P81755). In terms of tissue distribution, expressed by the venom duct.

Its subcellular location is the secreted. The sequence is that of Conotoxin Vn5.3 from Conus ventricosus (Mediterranean cone).